The primary structure comprises 951 residues: Spliceosome associated factor 3, U4/U6 recycling protein (951 aa).

Residues 1-58 form a disordered region; that stretch reads MAATGNEEQTLLPDIEEEAEGMEREMESEDDEEEGMGVEHSEEEDEEDTSEDERENEA. Positions 14 to 56 are enriched in acidic residues; that stretch reads DIEEEAEGMEREMESEDDEEEGMGVEHSEEEDEEDTSEDEREN. HAT repeat units follow at residues 88-120, 126-157, 163-199, 222-255, 304-336, 339-371, 374-410, and 467-500; these read GKLH…DEIR, SDRE…YSIG, GGIE…FEIV, AQLE…WADD, GDPA…YLDR, KIKD…ALER, ADHQ…YLRR, and KNMQ…LERS. Residues 517–941 are necessary and sufficient for U6 snRNA binding; it reads CTSDYPEHVC…LDTQTKSLSN (425 aa). Residues 533–593 adopt a coiled-coil conformation; it reads ERVEGSLEDW…VKADKKAQKK (61 aa). Residues 567–581 show a composition bias toward basic and acidic residues; it reads EALHARQEEEKAEQR. The tract at residues 567–686 is disordered; the sequence is EALHARQEEE…HDMPKEQRKD (120 aa). Over residues 582-596 the composition is skewed to basic residues; it reads RKVKADKKAQKKGQK. The span at 608 to 619 shows a compositional bias: acidic residues; sequence DDDEEEWGEEAE. Over residues 674–686 the composition is skewed to basic and acidic residues; the sequence is RQPHDMPKEQRKD. RRM domains are found at residues 688-766 and 785-862; these read NCVF…PCVD and HKIF…ISNP. A disordered region spans residues 905–938; sequence RQSTPDAKAENGTISAPHATVTDGETSLDTQTKS. Residues 927–938 are compositionally biased toward polar residues; that stretch reads DGETSLDTQTKS.

It is found in the nucleus. Its subcellular location is the nucleoplasm. It localises to the cajal body. The protein resides in the nucleus speckle. The protein localises to the cytoplasm. Functionally, U6 snRNP-binding protein that functions as a recycling factor of the splicing machinery. Promotes the initial reassembly of U4 and U6 snRNPs following their ejection from the spliceosome during its maturation. May also function as a substrate targeting factor for deubiquitinases and mediate the deubiquitination of components of the spliceosome and histones. This chain is Spliceosome associated factor 3, U4/U6 recycling protein, found in Danio rerio (Zebrafish).